Reading from the N-terminus, the 404-residue chain is Formate-dependent phosphoribosylglycinamide formyltransferase (404 aa).

N(1)-(5-phospho-beta-D-ribosyl)glycinamide is bound by residues 25–26 and E85; that span reads EL. ATP contacts are provided by residues R118, K159, 164-169, 199-202, and E207; these read SSGKGQ and EGFV. The region spanning 123–318 is the ATP-grasp domain; the sequence is RLAAEELGLP…EFELHARAIL (196 aa). Residues E277 and E289 each contribute to the Mg(2+) site. N(1)-(5-phospho-beta-D-ribosyl)glycinamide is bound by residues D296, K365, and 372–373; that span reads RR.

This sequence belongs to the PurK/PurT family. As to quaternary structure, homodimer.

The catalysed reaction is N(1)-(5-phospho-beta-D-ribosyl)glycinamide + formate + ATP = N(2)-formyl-N(1)-(5-phospho-beta-D-ribosyl)glycinamide + ADP + phosphate + H(+). Its pathway is purine metabolism; IMP biosynthesis via de novo pathway; N(2)-formyl-N(1)-(5-phospho-D-ribosyl)glycinamide from N(1)-(5-phospho-D-ribosyl)glycinamide (formate route): step 1/1. Its function is as follows. Involved in the de novo purine biosynthesis. Catalyzes the transfer of formate to 5-phospho-ribosyl-glycinamide (GAR), producing 5-phospho-ribosyl-N-formylglycinamide (FGAR). Formate is provided by PurU via hydrolysis of 10-formyl-tetrahydrofolate. This is Formate-dependent phosphoribosylglycinamide formyltransferase from Burkholderia thailandensis (strain ATCC 700388 / DSM 13276 / CCUG 48851 / CIP 106301 / E264).